The sequence spans 344 residues: Tripartite motif-containing protein 44 (344 aa).

Disordered regions lie at residues 1-25 and 66-165; these read MASGVGAAFEELPHDGTCDECEPDE and AWTP…EFDP. A compositionally biased stretch (basic and acidic residues) spans 75-92; the sequence is GAGKEEAEVKVEQEREIE. A compositionally biased stretch (acidic residues) spans 93–165; sequence SEAGEESESE…ETEAESEFDP (73 aa). The segment at 174–215 adopts a B box-type zinc-finger fold; it reads VAKRKCPDHGLDLSTYCQEDRQLICVLCPVIGAHQGHQLSTL. Cys-179, His-182, Cys-201, and His-207 together coordinate Zn(2+). The stretch at 290 to 325 forms a coiled coil; it reads AHVTEILADIQSHMDRLMTQMAQAKEQLDTSNESAE. The interval 309-344 is disordered; it reads QMAQAKEQLDTSNESAEPKAEGDEEGPSGASEEEDT. Residues 330 to 344 are compositionally biased toward acidic residues; the sequence is GDEEGPSGASEEEDT. Phosphoserine is present on residues Ser-336 and Ser-339.

Interacts (via coiled coil) with TRIM17 (via coiled coil). Highly expressed in testis.

May play a role in the process of differentiation and maturation of neuronal cells. May regulate the activity of TRIM17. Is a negative regulator of PAX6 expression. The sequence is that of Tripartite motif-containing protein 44 (TRIM44) from Homo sapiens (Human).